We begin with the raw amino-acid sequence, 154 residues long: Ribonuclease H (154 aa).

The RNase H type-1 domain maps to 5–146 (EQNIVYLYCD…ADELANRGID (142 aa)). Residues Asp-14, Glu-52, Asp-74, and Asp-138 each coordinate Mg(2+).

The protein belongs to the RNase H family. In terms of assembly, monomer. Requires Mg(2+) as cofactor.

It localises to the cytoplasm. It carries out the reaction Endonucleolytic cleavage to 5'-phosphomonoester.. Endonuclease that specifically degrades the RNA of RNA-DNA hybrids. The protein is Ribonuclease H of Coxiella burnetii (strain CbuG_Q212) (Coxiella burnetii (strain Q212)).